The following is a 298-amino-acid chain: ATP phosphoribosyltransferase (298 aa).

This sequence belongs to the ATP phosphoribosyltransferase family. Long subfamily. Mg(2+) serves as cofactor.

The protein resides in the cytoplasm. It carries out the reaction 1-(5-phospho-beta-D-ribosyl)-ATP + diphosphate = 5-phospho-alpha-D-ribose 1-diphosphate + ATP. It functions in the pathway amino-acid biosynthesis; L-histidine biosynthesis; L-histidine from 5-phospho-alpha-D-ribose 1-diphosphate: step 1/9. Its activity is regulated as follows. Feedback inhibited by histidine. Functionally, catalyzes the condensation of ATP and 5-phosphoribose 1-diphosphate to form N'-(5'-phosphoribosyl)-ATP (PR-ATP). Has a crucial role in the pathway because the rate of histidine biosynthesis seems to be controlled primarily by regulation of HisG enzymatic activity. This chain is ATP phosphoribosyltransferase, found in Aliivibrio fischeri (strain MJ11) (Vibrio fischeri).